A 1881-amino-acid chain; its full sequence is Kinesin-like protein KIF26A (1881 aa).

Disordered regions lie at residues 20–66 (PARE…AGGG), 145–193 (PASH…PPGP), and 309–330 (ASKRKKHHPPPAPSTRGTSTYP). A Phosphoserine modification is found at serine 30. One can recognise a Kinesin motor domain in the interval 364 to 718 (KVKVMLRIWP…VQLAARIHRL (355 aa)). 462–469 (GHMSLGKS) is a binding site for ATP. 8 disordered regions span residues 718–778 (LRRK…SSEQ), 794–827 (SDRELTDNEGPPDFVPIIPALSRRRPSEGPRDAD), 846–982 (GSEA…QAAL), 1078–1104 (YTSQMSEGPGDPGEFPEGTAWAGGSPA), 1118–1266 (LSES…PRLP), 1328–1425 (SGSL…PYRP), 1442–1633 (SKVR…SGEL), and 1652–1698 (YESM…TGLQ). Basic residues predominate over residues 742–751 (RRPPHLRPFH). Basic and acidic residues predominate over residues 818–827 (RPSEGPRDAD). Polar residues predominate over residues 905–915 (SDPSKTGTQSE). Positions 940-950 (LPSPAPPPPRQ) are enriched in pro residues. Positions 1084–1095 (EGPGDPGEFPEG) are enriched in low complexity. Residues 1151–1162 (EESKVRSSECGR) show a composition bias toward basic and acidic residues. Residue serine 1257 is modified to Phosphoserine. A compositionally biased stretch (low complexity) spans 1328–1353 (SGSLKTTSGSKKSVSPKGAFFPRPSG). Over residues 1366-1378 (LEQSTALTPTQAL) the composition is skewed to polar residues. A compositionally biased stretch (basic and acidic residues) spans 1390–1399 (RGEEEARPSG). Over residues 1400–1412 (RSDSSVPKATSSL) the composition is skewed to polar residues. Low complexity-rich tracts occupy residues 1477-1489 (PAKGVGATKPPAG), 1524-1537 (PGPRAAPRAVPGIG), and 1575-1587 (WGSTDSDSGNDSG). The span at 1616–1629 (RYSSGHGSDNSSVL) shows a compositional bias: polar residues. Serine 1654 bears the Phosphoserine mark. Residues 1664–1675 (SASSAPDSMSES) are compositionally biased toward low complexity. The segment covering 1685–1698 (RSLKSPKKRATGLQ) has biased composition (basic residues). Positions 1780–1812 (LRLAERRQQRLQEVQAKRDHLCEELAETQGRLM) form a coiled coil.

It belongs to the TRAFAC class myosin-kinesin ATPase superfamily. Kinesin family. KIF26 subfamily. In terms of assembly, interacts with GRB2 (via SH2 domain). Expressed in several neuronal populations.

The protein resides in the cytoplasm. Its subcellular location is the cytoskeleton. Functionally, atypical kinesin that plays a key role in enteric neuron development. Acts by repressing a cell growth signaling pathway in the enteric nervous system development, possibly via its interaction with GRB2 that prevents GRB2-binding to SHC, thereby attenating the GDNF-Ret signaling. Binds to microtubules but lacks microtubule-based motility due to the absence of ATPase activity. Plays a critical role in cerebral cortical development. It probably acts as a microtubule stabilizer that regulates neurite growth and radial migration of cortical excitatory neurons. The chain is Kinesin-like protein KIF26A (Kif26a) from Mus musculus (Mouse).